A 494-amino-acid chain; its full sequence is Alpha-amylase-related protein (494 aa).

The N-terminal stretch at 1 to 20 (MFKFALALTLCLAGASLSLA) is a signal peptide. A Pyrrolidone carboxylic acid modification is found at Q21. An intrachain disulfide couples C48 to C104. Ca(2+) is bound by residues N118, Q169, and D178. C157 and C171 are disulfide-bonded. Chloride is bound at residue R206. Residue D208 is the Nucleophile of the active site. H212 lines the Ca(2+) pocket. The active-site Proton donor is E245. Residues N308 and R343 each coordinate chloride. 3 disulfides stabilise this stretch: C376/C382, C418/C441, and C448/C460.

Belongs to the glycosyl hydrolase 13 family. In terms of assembly, monomer. It depends on Ca(2+) as a cofactor. The cofactor is chloride.

Its subcellular location is the secreted. It carries out the reaction Endohydrolysis of (1-&gt;4)-alpha-D-glucosidic linkages in polysaccharides containing three or more (1-&gt;4)-alpha-linked D-glucose units.. The sequence is that of Alpha-amylase-related protein (Amyrel) from Drosophila punjabiensis (Fruit fly).